Here is a 225-residue protein sequence, read N- to C-terminus: 7-cyano-7-deazaguanine synthase (225 aa).

Residue 10 to 20 participates in ATP binding; sequence FSGGQDSTTLA. 4 residues coordinate Zn(2+): C190, C205, C208, and C211.

It belongs to the QueC family. Zn(2+) serves as cofactor.

The catalysed reaction is 7-carboxy-7-deazaguanine + NH4(+) + ATP = 7-cyano-7-deazaguanine + ADP + phosphate + H2O + H(+). Its pathway is purine metabolism; 7-cyano-7-deazaguanine biosynthesis. Its function is as follows. Catalyzes the ATP-dependent conversion of 7-carboxy-7-deazaguanine (CDG) to 7-cyano-7-deazaguanine (preQ(0)). The protein is 7-cyano-7-deazaguanine synthase of Helicobacter pylori (strain J99 / ATCC 700824) (Campylobacter pylori J99).